The following is a 465-amino-acid chain: Ribulose bisphosphate carboxylase large chain (465 aa).

Lys4 carries the N6,N6,N6-trimethyllysine modification. Asn113 and Thr163 together coordinate substrate. The active-site Proton acceptor is Lys165. Lys167 serves as a coordination point for substrate. Residues Lys191, Asp193, and Glu194 each contribute to the Mg(2+) site. Lys191 is subject to N6-carboxylysine. The active-site Proton acceptor is His284. 3 residues coordinate substrate: Arg285, His317, and Ser369.

Belongs to the RuBisCO large chain family. Type I subfamily. In terms of assembly, heterohexadecamer of 8 large chains and 8 small chains; disulfide-linked. The disulfide link is formed within the large subunit homodimers. The cofactor is Mg(2+). Post-translationally, the disulfide bond which can form in the large chain dimeric partners within the hexadecamer appears to be associated with oxidative stress and protein turnover.

Its subcellular location is the plastid. The protein resides in the chloroplast. It catalyses the reaction 2 (2R)-3-phosphoglycerate + 2 H(+) = D-ribulose 1,5-bisphosphate + CO2 + H2O. The catalysed reaction is D-ribulose 1,5-bisphosphate + O2 = 2-phosphoglycolate + (2R)-3-phosphoglycerate + 2 H(+). Its function is as follows. RuBisCO catalyzes two reactions: the carboxylation of D-ribulose 1,5-bisphosphate, the primary event in carbon dioxide fixation, as well as the oxidative fragmentation of the pentose substrate in the photorespiration process. Both reactions occur simultaneously and in competition at the same active site. This chain is Ribulose bisphosphate carboxylase large chain, found in Ulmus alata (Winged elm).